A 538-amino-acid polypeptide reads, in one-letter code: Cytochrome P450 52A4 (538 aa).

The helical transmembrane segment at Trp27–Thr46 threads the bilayer. Cys485 serves as a coordination point for heme.

This sequence belongs to the cytochrome P450 family. Heme is required as a cofactor.

Its subcellular location is the membrane. Functionally, together with an NADPH cytochrome P450 the enzyme system catalyzes the terminal hydroxylation as the first step in the assimilation of alkanes and fatty acids. The protein is Cytochrome P450 52A4 (CYP52A4) of Candida maltosa (Yeast).